The following is a 689-amino-acid chain: Translation initiation factor IF-2 (689 aa).

Residues 41–109 form a disordered region; the sequence is DYERVFGGGN…EAPAAEEREA (69 aa). The span at 61 to 70 shows a compositional bias: basic residues; sequence RKGRQKKRRR. A compositionally biased stretch (low complexity) spans 80–94; sequence RGPRAAAPSRPSRGR. Over residues 96–109 the composition is skewed to basic and acidic residues; it reads AAREEAPAAEEREA. A tr-type G domain is found at 192 to 361; the sequence is EKPPVITVMG…LVVAELEELR (170 aa). Positions 201–208 are G1; the sequence is GHVDHGKT. 201 to 208 contributes to the GTP binding site; sequence GHVDHGKT. The interval 226–230 is G2; that stretch reads GITQH. The tract at residues 247–250 is G3; that stretch reads DTPG. Residues 247 to 251 and 301 to 304 contribute to the GTP site; these read DTPGH and NKID. Positions 301–304 are G4; the sequence is NKID. Positions 337-339 are G5; the sequence is SAK.

It belongs to the TRAFAC class translation factor GTPase superfamily. Classic translation factor GTPase family. IF-2 subfamily.

It is found in the cytoplasm. In terms of biological role, one of the essential components for the initiation of protein synthesis. Protects formylmethionyl-tRNA from spontaneous hydrolysis and promotes its binding to the 30S ribosomal subunits. Also involved in the hydrolysis of GTP during the formation of the 70S ribosomal complex. This chain is Translation initiation factor IF-2, found in Rubrobacter xylanophilus (strain DSM 9941 / JCM 11954 / NBRC 16129 / PRD-1).